Here is a 72-residue protein sequence, read N- to C-terminus: Translation initiation factor IF-1 (72 aa).

An S1-like domain is found at 1-72; that stretch reads MAKEDAIELQ…SKGRIVFRAR (72 aa).

Belongs to the IF-1 family. As to quaternary structure, component of the 30S ribosomal translation pre-initiation complex which assembles on the 30S ribosome in the order IF-2 and IF-3, IF-1 and N-formylmethionyl-tRNA(fMet); mRNA recruitment can occur at any time during PIC assembly.

It localises to the cytoplasm. Functionally, one of the essential components for the initiation of protein synthesis. Stabilizes the binding of IF-2 and IF-3 on the 30S subunit to which N-formylmethionyl-tRNA(fMet) subsequently binds. Helps modulate mRNA selection, yielding the 30S pre-initiation complex (PIC). Upon addition of the 50S ribosomal subunit IF-1, IF-2 and IF-3 are released leaving the mature 70S translation initiation complex. The polypeptide is Translation initiation factor IF-1 (Aliivibrio fischeri (strain ATCC 700601 / ES114) (Vibrio fischeri)).